The sequence spans 595 residues: Transketolase-like protein 1 (595 aa).

Thiamine diphosphate is bound at residue 93–95 (GWP). Aspartate 125, asparagine 155, and isoleucine 157 together coordinate Mg(2+). Residue asparagine 155 participates in thiamine diphosphate binding. Thiamine diphosphate is bound by residues lysine 217, glutamate 339, and phenylalanine 365. The Proton donor role is filled by glutamate 339. Substrate-binding residues include histidine 389 and aspartate 397. Residue histidine 401 coordinates thiamine diphosphate.

This sequence belongs to the transketolase family. Homodimer. Requires Mg(2+) as cofactor. Ca(2+) is required as a cofactor. It depends on Mn(2+) as a cofactor. Co(2+) serves as cofactor. The cofactor is thiamine diphosphate. In terms of tissue distribution, not expressed in the embryonic neocortex.

It is found in the cytoplasm. It carries out the reaction D-sedoheptulose 7-phosphate + D-glyceraldehyde 3-phosphate = aldehydo-D-ribose 5-phosphate + D-xylulose 5-phosphate. Functionally, catalyzes the transfer of a two-carbon ketol group from a ketose donor to an aldose acceptor, via a covalent intermediate with the cofactor thiamine pyrophosphate. This chain is Transketolase-like protein 1, found in Mus musculus (Mouse).